The chain runs to 120 residues: NAD(P)H-quinone oxidoreductase subunit 3, chloroplastic (120 aa).

The next 3 helical transmembrane spans lie at 9-29 (IFWA…FISG), 64-84 (MFAL…PWAM), and 88-108 (VLGV…IVGL).

The protein belongs to the complex I subunit 3 family. In terms of assembly, NDH is composed of at least 16 different subunits, 5 of which are encoded in the nucleus.

The protein localises to the plastid. It localises to the chloroplast thylakoid membrane. The enzyme catalyses a plastoquinone + NADH + (n+1) H(+)(in) = a plastoquinol + NAD(+) + n H(+)(out). It catalyses the reaction a plastoquinone + NADPH + (n+1) H(+)(in) = a plastoquinol + NADP(+) + n H(+)(out). In terms of biological role, NDH shuttles electrons from NAD(P)H:plastoquinone, via FMN and iron-sulfur (Fe-S) centers, to quinones in the photosynthetic chain and possibly in a chloroplast respiratory chain. The immediate electron acceptor for the enzyme in this species is believed to be plastoquinone. Couples the redox reaction to proton translocation, and thus conserves the redox energy in a proton gradient. In Panax ginseng (Korean ginseng), this protein is NAD(P)H-quinone oxidoreductase subunit 3, chloroplastic.